A 173-amino-acid polypeptide reads, in one-letter code: MVSKWGAGSAFGLQGNGSNSSGLRPLLKRTAQINLRQTQDNAQTGKFSKYLNTAQALHQMGVIVPSLETWPGKPSTGIATRAVGGVSVQAATRLDFYKWRSAECNNKVIPHLHVPTRLLKWPDRCDGFKRGTEFVVLGCRGGPGIGSRNLMSPHRAQLGHRQAEAVCRKPVGF.

This sequence belongs to the MgpC family.

This Mycoplasma pneumoniae (strain ATCC 29342 / M129 / Subtype 1) (Mycoplasmoides pneumoniae) protein is Putative MgpC-like protein MPN_092.